Reading from the N-terminus, the 510-residue chain is Ankyrin repeat domain-containing protein 13C-A (510 aa).

Residues 1–19 (MTGEKIRSLHKDQKPSKDE) are compositionally biased toward basic and acidic residues. Residues 1-35 (MTGEKIRSLHKDQKPSKDEDLLEPDEEATAGGTFT) form a disordered region. ANK repeat units follow at residues 80 to 111 (DVYFPVHECVLKGDIRRLSSLIRSHSIGQKDS), 112 to 141 (HGNTPLHLAVMLGNKECAHLLLAHNAPVKV), and 145 to 174 (QGWSPLAEAISYGDRQMITALLRKLKQQSR).

The protein localises to the endoplasmic reticulum membrane. Its function is as follows. Acts as a molecular chaperone for G protein-coupled receptors, regulating their biogenesis and exit from the ER. This chain is Ankyrin repeat domain-containing protein 13C-A (ankrd13c-a), found in Xenopus laevis (African clawed frog).